The chain runs to 355 residues: Protein-glutamate methylesterase/protein-glutamine glutaminase 3 (355 aa).

In terms of domain architecture, Response regulatory spans Ser-8–Lys-123. A 4-aspartylphosphate modification is found at Asp-59. A disordered region spans residues Arg-139–Ala-161. Pro residues predominate over residues Gly-145 to Pro-159. The CheB-type methylesterase domain occupies Pro-160–Ser-350. Catalysis depends on residues Ser-172, His-199, and Asp-292.

The protein belongs to the CheB family. In terms of processing, phosphorylated by CheA. Phosphorylation of the N-terminal regulatory domain activates the methylesterase activity.

Its subcellular location is the cytoplasm. It catalyses the reaction [protein]-L-glutamate 5-O-methyl ester + H2O = L-glutamyl-[protein] + methanol + H(+). It carries out the reaction L-glutaminyl-[protein] + H2O = L-glutamyl-[protein] + NH4(+). In terms of biological role, involved in chemotaxis. Part of a chemotaxis signal transduction system that modulates chemotaxis in response to various stimuli. Catalyzes the demethylation of specific methylglutamate residues introduced into the chemoreceptors (methyl-accepting chemotaxis proteins or MCP) by CheR. Also mediates the irreversible deamidation of specific glutamine residues to glutamic acid. In Paramagnetospirillum magneticum (strain ATCC 700264 / AMB-1) (Magnetospirillum magneticum), this protein is Protein-glutamate methylesterase/protein-glutamine glutaminase 3.